A 427-amino-acid polypeptide reads, in one-letter code: Kynureninase (427 aa).

Pyridoxal 5'-phosphate is bound by residues threonine 104, threonine 105, 132 to 135, aspartate 213, histidine 216, and tyrosine 238; that span reads FPSD. N6-(pyridoxal phosphate)lysine is present on lysine 239. The pyridoxal 5'-phosphate site is built by tryptophan 267 and threonine 295.

Belongs to the kynureninase family. Homodimer. The cofactor is pyridoxal 5'-phosphate.

The enzyme catalyses L-kynurenine + H2O = anthranilate + L-alanine + H(+). The catalysed reaction is 3-hydroxy-L-kynurenine + H2O = 3-hydroxyanthranilate + L-alanine + H(+). Its pathway is amino-acid degradation; L-kynurenine degradation; L-alanine and anthranilate from L-kynurenine: step 1/1. The protein operates within cofactor biosynthesis; NAD(+) biosynthesis; quinolinate from L-kynurenine: step 2/3. In terms of biological role, catalyzes the cleavage of L-kynurenine (L-Kyn) and L-3-hydroxykynurenine (L-3OHKyn) into anthranilic acid (AA) and 3-hydroxyanthranilic acid (3-OHAA), respectively. In Shouchella clausii (strain KSM-K16) (Alkalihalobacillus clausii), this protein is Kynureninase.